We begin with the raw amino-acid sequence, 117 residues long: Prefoldin subunit beta (117 aa).

It belongs to the prefoldin subunit beta family. Heterohexamer of two alpha and four beta subunits.

Its subcellular location is the cytoplasm. In terms of biological role, molecular chaperone capable of stabilizing a range of proteins. Seems to fulfill an ATP-independent, HSP70-like function in archaeal de novo protein folding. The sequence is that of Prefoldin subunit beta (pfdB) from Methanosarcina acetivorans (strain ATCC 35395 / DSM 2834 / JCM 12185 / C2A).